We begin with the raw amino-acid sequence, 51 residues long: Small ribosomal subunit protein uS14 (51 aa).

Zn(2+) is bound by residues Cys16, Cys19, Cys34, and Cys37.

This sequence belongs to the universal ribosomal protein uS14 family. Zinc-binding uS14 subfamily. In terms of assembly, part of the 30S ribosomal subunit. Zn(2+) serves as cofactor.

Functionally, binds 16S rRNA, required for the assembly of 30S particles. This chain is Small ribosomal subunit protein uS14, found in Archaeoglobus fulgidus (strain ATCC 49558 / DSM 4304 / JCM 9628 / NBRC 100126 / VC-16).